A 599-amino-acid polypeptide reads, in one-letter code: Elongation factor 4 (599 aa).

The region spanning 5 to 187 (SHIRNFSIIA…ALVNGIPAPV (183 aa)) is the tr-type G domain. GTP is bound by residues 17–22 (DHGKST) and 134–137 (NKMD).

Belongs to the TRAFAC class translation factor GTPase superfamily. Classic translation factor GTPase family. LepA subfamily.

It is found in the cell inner membrane. It catalyses the reaction GTP + H2O = GDP + phosphate + H(+). In terms of biological role, required for accurate and efficient protein synthesis under certain stress conditions. May act as a fidelity factor of the translation reaction, by catalyzing a one-codon backward translocation of tRNAs on improperly translocated ribosomes. Back-translocation proceeds from a post-translocation (POST) complex to a pre-translocation (PRE) complex, thus giving elongation factor G a second chance to translocate the tRNAs correctly. Binds to ribosomes in a GTP-dependent manner. The protein is Elongation factor 4 of Teredinibacter turnerae (strain ATCC 39867 / T7901).